The primary structure comprises 569 residues: MNQATPTKHVFVTGGVASSLGKGLTASSLGSLLRSRGLRVTMQKLDPYLNVDPGTMNPFQHGEVFVTNDGAETDLDIGHYERFLDTDLSQIANVTTGQVYSSVIAKERRGDYLGDTVQVIPHITNEIKERILAMGGTGEDGRSVDVVITEVGGTVGDIESLPFLEAARQVRHDIGRENCFFLHVSLVPYIGPSGELKTKPTQHSVAALRQVGIQPDAVVCRADRELPPSIKKKISLMCDVDQDAVVTCADAPSIYDIPKVLHREGLDAYLVRRLDLPFRDVDWTVWDDLLRRVHHPKEEVTVALVGKYVDLPDAYLSVAEALRAGGFAHEAKVQLRWVASDECQTAAGAARNLQDVDAICVPGGFGVRGIEGKLGALTYARTHGIPTLGLCLGLQCMVIEYARNVVGLEKAGSTEFDPDTPEPVIATMAEQKAFVEGAGDLGGTMRLGLYPAALKDGSIAREVYGSSLIEERHRHRYEVNNAYRDQLEEAGLVFSGTSPDNSLVEYVELPRDTHPYYISTQAHPELRSRPTRPHPLFAGLVGAAIERQRELRFPIDETGLRREPEPDED.

An amidoligase domain region spans residues M1–L276. S18 provides a ligand contact to CTP. S18 serves as a coordination point for UTP. ATP-binding positions include S19–L24 and D76. Mg(2+)-binding residues include D76 and E150. CTP contacts are provided by residues D157–E159, K197–Q202, and K233. Residues K197 to Q202 and K233 each bind UTP. The Glutamine amidotransferase type-1 domain occupies T301–E550. G364 contacts L-glutamine. The Nucleophile; for glutamine hydrolysis role is filled by C391. L-glutamine-binding positions include L392–Q395, E415, and R476. Catalysis depends on residues H523 and E525.

This sequence belongs to the CTP synthase family. Homotetramer.

The enzyme catalyses UTP + L-glutamine + ATP + H2O = CTP + L-glutamate + ADP + phosphate + 2 H(+). It catalyses the reaction L-glutamine + H2O = L-glutamate + NH4(+). It carries out the reaction UTP + NH4(+) + ATP = CTP + ADP + phosphate + 2 H(+). Its pathway is pyrimidine metabolism; CTP biosynthesis via de novo pathway; CTP from UDP: step 2/2. With respect to regulation, allosterically activated by GTP, when glutamine is the substrate; GTP has no effect on the reaction when ammonia is the substrate. The allosteric effector GTP functions by stabilizing the protein conformation that binds the tetrahedral intermediate(s) formed during glutamine hydrolysis. Inhibited by the product CTP, via allosteric rather than competitive inhibition. Its function is as follows. Catalyzes the ATP-dependent amination of UTP to CTP with either L-glutamine or ammonia as the source of nitrogen. Regulates intracellular CTP levels through interactions with the four ribonucleotide triphosphates. This is CTP synthase from Nocardioides sp. (strain ATCC BAA-499 / JS614).